Reading from the N-terminus, the 119-residue chain is Large ribosomal subunit protein bL20 (119 aa).

The protein belongs to the bacterial ribosomal protein bL20 family.

Its function is as follows. Binds directly to 23S ribosomal RNA and is necessary for the in vitro assembly process of the 50S ribosomal subunit. It is not involved in the protein synthesizing functions of that subunit. The sequence is that of Large ribosomal subunit protein bL20 from Xanthomonas oryzae pv. oryzae (strain KACC10331 / KXO85).